The sequence spans 550 residues: Chaperonin GroEL (550 aa).

ATP is bound by residues 30–33, K51, 87–91, G415, and D496; these read TLGP and DGTTT.

The protein belongs to the chaperonin (HSP60) family. In terms of assembly, forms a cylinder of 14 subunits composed of two heptameric rings stacked back-to-back. Interacts with the co-chaperonin GroES.

The protein localises to the cytoplasm. It catalyses the reaction ATP + H2O + a folded polypeptide = ADP + phosphate + an unfolded polypeptide.. Its function is as follows. Together with its co-chaperonin GroES, plays an essential role in assisting protein folding. The GroEL-GroES system forms a nano-cage that allows encapsulation of the non-native substrate proteins and provides a physical environment optimized to promote and accelerate protein folding. In Rickettsia prowazekii (strain Madrid E), this protein is Chaperonin GroEL.